A 248-amino-acid polypeptide reads, in one-letter code: Ubiquinone/menaquinone biosynthesis C-methyltransferase UbiE (248 aa).

S-adenosyl-L-methionine contacts are provided by serine 68 and aspartate 92.

The protein belongs to the class I-like SAM-binding methyltransferase superfamily. MenG/UbiE family.

The catalysed reaction is a 2-demethylmenaquinol + S-adenosyl-L-methionine = a menaquinol + S-adenosyl-L-homocysteine + H(+). The enzyme catalyses a 2-methoxy-6-(all-trans-polyprenyl)benzene-1,4-diol + S-adenosyl-L-methionine = a 5-methoxy-2-methyl-3-(all-trans-polyprenyl)benzene-1,4-diol + S-adenosyl-L-homocysteine + H(+). It participates in quinol/quinone metabolism; menaquinone biosynthesis; menaquinol from 1,4-dihydroxy-2-naphthoate: step 2/2. The protein operates within cofactor biosynthesis; ubiquinone biosynthesis. Its function is as follows. Methyltransferase required for the conversion of demethylmenaquinol (DMKH2) to menaquinol (MKH2) and the conversion of 2-polyprenyl-6-methoxy-1,4-benzoquinol (DDMQH2) to 2-polyprenyl-3-methyl-6-methoxy-1,4-benzoquinol (DMQH2). The protein is Ubiquinone/menaquinone biosynthesis C-methyltransferase UbiE of Rickettsia bellii (strain RML369-C).